Consider the following 286-residue polypeptide: ATP synthase gamma chain (286 aa).

Belongs to the ATPase gamma chain family. In terms of assembly, F-type ATPases have 2 components, CF(1) - the catalytic core - and CF(0) - the membrane proton channel. CF(1) has five subunits: alpha(3), beta(3), gamma(1), delta(1), epsilon(1). CF(0) has three main subunits: a, b and c.

The protein localises to the cell inner membrane. In terms of biological role, produces ATP from ADP in the presence of a proton gradient across the membrane. The gamma chain is believed to be important in regulating ATPase activity and the flow of protons through the CF(0) complex. The chain is ATP synthase gamma chain from Shewanella putrefaciens (strain CN-32 / ATCC BAA-453).